A 472-amino-acid polypeptide reads, in one-letter code: Eukaryotic translation initiation factor 2 subunit 3, Y-linked (472 aa).

The residue at position 2 (Ala-2) is an N-acetylalanine. Position 16 is a phosphoserine (Ser-16). The tr-type G domain maps to Gln-39–Leu-247. The segment at Gly-48–Ser-55 is G1. A GTP-binding site is contributed by Ala-51–Thr-56. A G2 region spans residues Asn-76–Lys-80. Positions Asp-134–Gly-137 are G3. GTP-binding positions include Asn-190–Asp-193 and Ser-225–Gln-227. The interval Asn-190 to Asp-193 is G4. The interval Ser-225–Gln-227 is G5.

The protein belongs to the TRAFAC class translation factor GTPase superfamily. Classic translation factor GTPase family. EIF2G subfamily. As to quaternary structure, eIF2 is a heterotrimer composed of an alpha (EIF2S1), a beta (EIF2S2) and a gamma (Eif2s3x and Eif2s3y) chain. eIF2 is member of the 43S pre-initiation complex (43S PIC). As to expression, widely expressed in males.

It catalyses the reaction GTP + H2O = GDP + phosphate + H(+). Functionally, member of the eIF2 complex that functions in the early steps of protein synthesis by forming a ternary complex with GTP and initiator tRNA. This complex binds to a 40S ribosomal subunit, followed by mRNA binding to form the 43S pre-initiation complex (43S PIC). Junction of the 60S ribosomal subunit to form the 80S initiation complex is preceded by hydrolysis of the GTP bound to eIF2 and release of an eIF2-GDP binary complex. In order for eIF2 to recycle and catalyze another round of initiation, the GDP bound to eIF2 must exchange with GTP by way of a reaction catalyzed by eIF-2B. Along with its paralog on chromosome X, may contribute to spermatogenesis up to the round spermatid stage. This is Eukaryotic translation initiation factor 2 subunit 3, Y-linked (Eif2s3y) from Rattus norvegicus (Rat).